Here is a 109-residue protein sequence, read N- to C-terminus: Encapsulin nanocompartment cargo protein EncD (109 aa).

A Fe cation-binding site is contributed by glutamate 47. The interval 61–94 is disordered; sequence AGGRGAAAPTPAREAPAEAPRLARGSADELHEAA. Positions 66–85 are enriched in low complexity; it reads AAAPTPAREAPAEAPRLARG. Positions 100–106 are probable targeting peptide; the sequence is LTVGSLR.

Its subcellular location is the encapsulin nanocompartment. Cargo protein of a type 1 encapsulin nanocompartment. May help nucleate Fe atoms in the interior of the encapsulin nanocompartment. Present in about 47 copies/encapsulin nanocompartment. In Myxococcus xanthus (strain DK1622), this protein is Encapsulin nanocompartment cargo protein EncD.